Consider the following 168-residue polypeptide: Ribosome maturation factor RimM (168 aa).

The PRC barrel domain maps to 95–166 (EHEFYYSDII…RIQITPMEGL (72 aa)).

It belongs to the RimM family. Binds ribosomal protein uS19.

The protein resides in the cytoplasm. Its function is as follows. An accessory protein needed during the final step in the assembly of 30S ribosomal subunit, possibly for assembly of the head region. Essential for efficient processing of 16S rRNA. May be needed both before and after RbfA during the maturation of 16S rRNA. It has affinity for free ribosomal 30S subunits but not for 70S ribosomes. This chain is Ribosome maturation factor RimM, found in Staphylococcus saprophyticus subsp. saprophyticus (strain ATCC 15305 / DSM 20229 / NCIMB 8711 / NCTC 7292 / S-41).